The sequence spans 602 residues: Aspartate--tRNA(Asp/Asn) ligase (602 aa).

L-aspartate is bound at residue Glu176. Residues 200–203 (QQFK) form an aspartate region. 2 residues coordinate L-aspartate: Arg222 and His452. Position 222–224 (222–224 (RDE)) interacts with ATP. Glu490 contributes to the ATP binding site. Arg497 provides a ligand contact to L-aspartate. 542–545 (GIDR) is an ATP binding site.

This sequence belongs to the class-II aminoacyl-tRNA synthetase family. Type 1 subfamily. In terms of assembly, homodimer.

Its subcellular location is the cytoplasm. The catalysed reaction is tRNA(Asx) + L-aspartate + ATP = L-aspartyl-tRNA(Asx) + AMP + diphosphate. Functionally, aspartyl-tRNA synthetase with relaxed tRNA specificity since it is able to aspartylate not only its cognate tRNA(Asp) but also tRNA(Asn). Reaction proceeds in two steps: L-aspartate is first activated by ATP to form Asp-AMP and then transferred to the acceptor end of tRNA(Asp/Asn). The chain is Aspartate--tRNA(Asp/Asn) ligase from Rickettsia africae (strain ESF-5).